A 611-amino-acid polypeptide reads, in one-letter code: tRNA uridine 5-carboxymethylaminomethyl modification enzyme MnmG (611 aa).

An FAD-binding site is contributed by 14–19 (GAGHAG). An NAD(+)-binding site is contributed by 274–288 (GPRYCPSIEDKIVKF).

The protein belongs to the MnmG family. As to quaternary structure, homodimer. Heterotetramer of two MnmE and two MnmG subunits. It depends on FAD as a cofactor.

The protein resides in the cytoplasm. Functionally, NAD-binding protein involved in the addition of a carboxymethylaminomethyl (cmnm) group at the wobble position (U34) of certain tRNAs, forming tRNA-cmnm(5)s(2)U34. In Chlamydia caviae (strain ATCC VR-813 / DSM 19441 / 03DC25 / GPIC) (Chlamydophila caviae), this protein is tRNA uridine 5-carboxymethylaminomethyl modification enzyme MnmG.